A 101-amino-acid polypeptide reads, in one-letter code: Small ribosomal subunit protein uS10 (101 aa).

Belongs to the universal ribosomal protein uS10 family. In terms of assembly, part of the 30S ribosomal subunit.

In terms of biological role, involved in the binding of tRNA to the ribosomes. The polypeptide is Small ribosomal subunit protein uS10 (Porphyromonas gingivalis (strain ATCC 33277 / DSM 20709 / CIP 103683 / JCM 12257 / NCTC 11834 / 2561)).